Reading from the N-terminus, the 173-residue chain is Eggshell protein (173 aa).

The N-terminal stretch at 1–18 (MKQSLTLVFLVAIGYATA) is a signal peptide. The segment covering 145 to 162 (GSGKGKGGGKGGKGGKGG) has biased composition (gly residues). The segment at 145–173 (GSGKGKGGGKGGKGGKGGTYKPSHYGGGY) is disordered.

The chain is Eggshell protein from Schistosoma mansoni (Blood fluke).